We begin with the raw amino-acid sequence, 286 residues long: Haloalkane dehalogenase 2 (286 aa).

The AB hydrolase-1 domain maps to 35–134 (PPILLCHGNP…RVRGVVLGNT (100 aa)). The Nucleophile role is filled by Asp-109. The active-site Proton donor is Asp-238. His-267 functions as the Proton acceptor in the catalytic mechanism.

The protein belongs to the haloalkane dehalogenase family. Type 1 subfamily. As to quaternary structure, monomer.

The enzyme catalyses 1-haloalkane + H2O = a halide anion + a primary alcohol + H(+). Functionally, catalyzes hydrolytic cleavage of carbon-halogen bonds in halogenated aliphatic compounds, leading to the formation of the corresponding primary alcohols, halide ions and protons. The protein is Haloalkane dehalogenase 2 (dhmA2) of Mycobacterium bovis (strain ATCC BAA-935 / AF2122/97).